Reading from the N-terminus, the 565-residue chain is MEPKTKKQRSLYIPYAGPVLLEFPLLNKGSAFSMEERRNFNLLGLLPEVVETIEEQAERAWIQYQGFKTEIDKHIYLRNIQDTNETLFYRLVNNHLDEMMPVIYTPTVGAACERFSEIYRRSRGVFISYQNRHNMDDILQNVPNHNIKVIVVTDGERILGLGDQGIGGMGIPIGKLSLYTACGGISPAYTLPVVLDVGTNNQQLLNDPLYMGWRNPRITDDEYYEFVDEFIQAVKQRWPDVLLQFEDFAQKNAMPLLNRYRNEICSFNDDIQGTAAVTVGTLIAASRAAGGQLSEKKIVFLGAGSAGCGIAEMIIAQTQREGLSEEAARQKVFMVDRFGLLTDKMPNLLPFQTKLVQKRENLSDRDTDSDVLSLLDVVRNVKPDILIGVSGQTGLFTEEIIREMHKHCPRPIVMPLSNPTSRVEATPQDIIAWTEGNALVATGSPFNPVVWKDKIYPIAQCNNAFIFPGIGLGVIASGASRITDEMLMSASETLAQYSPLVLNGEGLVLPELKDIQKVSRAIAFAVGKMAQQQGVAVKTSAEALQQAIDDNFWQAEYRDYRRTSI.

Catalysis depends on Y104, which acts as the Proton donor. R157 serves as a coordination point for NAD(+). K175 functions as the Proton acceptor in the catalytic mechanism. Residues E246, D247, and D270 each contribute to the a divalent metal cation site. Residues D270 and N418 each coordinate NAD(+).

It belongs to the malic enzymes family. Homotetramer. Mg(2+) is required as a cofactor. It depends on Mn(2+) as a cofactor.

The catalysed reaction is (S)-malate + NAD(+) = pyruvate + CO2 + NADH. It carries out the reaction oxaloacetate + H(+) = pyruvate + CO2. The protein is NAD-dependent malic enzyme of Escherichia coli O157:H7.